Consider the following 154-residue polypeptide: Large ribosomal subunit protein uL13 (154 aa).

The protein belongs to the universal ribosomal protein uL13 family. Part of the 50S ribosomal subunit.

Functionally, this protein is one of the early assembly proteins of the 50S ribosomal subunit, although it is not seen to bind rRNA by itself. It is important during the early stages of 50S assembly. This chain is Large ribosomal subunit protein uL13, found in Brucella anthropi (strain ATCC 49188 / DSM 6882 / CCUG 24695 / JCM 21032 / LMG 3331 / NBRC 15819 / NCTC 12168 / Alc 37) (Ochrobactrum anthropi).